A 473-amino-acid polypeptide reads, in one-letter code: Fumarate hydratase class II (473 aa).

Residues 105–107 (SGT), 130–133 (HPND), 140–142 (SSN), and Thr-188 contribute to the substrate site. The active-site Proton donor/acceptor is the His-189. Ser-319 is an active-site residue. Residues Ser-320 and 325–327 (KVN) contribute to the substrate site.

This sequence belongs to the class-II fumarase/aspartase family. Fumarase subfamily. Homotetramer.

The protein resides in the cytoplasm. It carries out the reaction (S)-malate = fumarate + H2O. The protein operates within carbohydrate metabolism; tricarboxylic acid cycle; (S)-malate from fumarate: step 1/1. Functionally, involved in the TCA cycle. Catalyzes the stereospecific interconversion of fumarate to L-malate. The polypeptide is Fumarate hydratase class II (Xylella fastidiosa (strain 9a5c)).